We begin with the raw amino-acid sequence, 193 residues long: Interleukin-18 (193 aa).

The propeptide occupies 1–36; that stretch reads MAAEQVEDYCISFVEMKFINNTLYFVAENDEDLESD.

This sequence belongs to the IL-1 family. Forms a ternary complex with ligand-binding receptor subunit IL18R1 and signaling receptor subunit IL18RAP at the plasma membrane. Mature IL18 first binds to IL18R1 forming a low affinity binary complex, which then interacts with IL18RAP to form a high affinity ternary complex that signals inside the cell. Interacts with cargo receptor TMED10; the interaction mediates the translocation from the cytoplasm into the ERGIC (endoplasmic reticulum-Golgi intermediate compartment) and thereby secretion. Post-translationally, the pro-IL-18 precursor is processed by CASP1, CASP4 or CASP5 to yield its mature, active form. The pro-IL-18 precursor features autoinhibitory interactions between the propeptide and the post-cleavage-site region, preventing recognition by the IL18R1 receptor. Processing by CASP1, CASP4 or CASP5 induces conformational changes to generate critical receptor-binding sites. The mature form is then secreted and released in the extracellular milieu by passing through the gasdermin-D (GSDMD) pore. In contrast, cleavage by CASP3 inactivates IL18.

It is found in the cytoplasm. Its subcellular location is the cytosol. It localises to the secreted. Pro-inflammatory cytokine primarily involved in epithelial barrier repair, polarized T-helper 1 (Th1) cell and natural killer (NK) cell immune responses. Upon binding to IL18R1 and IL18RAP, forms a signaling ternary complex which activates NF-kappa-B, triggering synthesis of inflammatory mediators. Synergizes with IL12/interleukin-12 to induce IFNG synthesis from T-helper 1 (Th1) cells and natural killer (NK) cells. Involved in transduction of inflammation downstream of pyroptosis: its mature form is specifically released in the extracellular milieu by passing through the gasdermin-D (GSDMD) pore. This is Interleukin-18 (IL18) from Bos taurus (Bovine).